A 206-amino-acid polypeptide reads, in one-letter code: MAMLSSRRVAAPAKASAIRRSRVMPVVRAAAASSEVPDMNKRNIMNLILAGGAGLPITTLALGYGAFFVPPSSGGGGGGQAAKDALGNDIKAGEWLKTHLAGDRSLSQGLKGDPTYLIVTADSTIEKYGLNAVCTHLGCVVPWVAAENKFKCPCHGSQYNAEGKVVRGPAPLSLALAHCDVAESGLVTFSTWTETDFRTGLEPWWA.

Residues 1–29 constitute a chloroplast transit peptide; it reads MAMLSSRRVAAPAKASAIRRSRVMPVVRA. Residues 39 to 68 traverse the membrane as a helical segment; that stretch reads MNKRNIMNLILAGGAGLPITTLALGYGAFF. The Rieske domain occupies 92 to 188; sequence AGEWLKTHLA…CDVAESGLVT (97 aa). [2Fe-2S] cluster contacts are provided by cysteine 134, histidine 136, cysteine 152, and histidine 155. A disulfide bond links cysteine 139 and cysteine 154.

Belongs to the Rieske iron-sulfur protein family. In terms of assembly, the 4 large subunits of the cytochrome b6-f complex are cytochrome b6, subunit IV (17 kDa polypeptide, petD), cytochrome f and the Rieske protein, while the 4 small subunits are petG, petL, petM and petN. The complex functions as a dimer. It depends on [2Fe-2S] cluster as a cofactor.

Its subcellular location is the plastid. The protein resides in the chloroplast thylakoid membrane. The catalysed reaction is 2 oxidized [plastocyanin] + a plastoquinol + 2 H(+)(in) = 2 reduced [plastocyanin] + a plastoquinone + 4 H(+)(out). Its function is as follows. Component of the cytochrome b6-f complex, which mediates electron transfer between photosystem II (PSII) and photosystem I (PSI), cyclic electron flow around PSI, and state transitions. The polypeptide is Cytochrome b6-f complex iron-sulfur subunit, chloroplastic (petC) (Chlamydomonas reinhardtii (Chlamydomonas smithii)).